Reading from the N-terminus, the 285-residue chain is Ribonuclease H1 (285 aa).

The segment at 72–126 (RSSSSPDGSKGQESAHEQKSQAKTSKRPREPLGEGEELPEPGPKHTRQDTEPAAV) is disordered. The RNase H type-1 domain maps to 135–281 (MGESVIVYTD…ADRLAREGAK (147 aa)). Mg(2+) is bound by residues aspartate 144, glutamate 185, aspartate 209, and aspartate 273.

It belongs to the RNase H family. In terms of assembly, monomer. It depends on Mg(2+) as a cofactor.

The protein resides in the cytoplasm. It catalyses the reaction Endonucleolytic cleavage to 5'-phosphomonoester.. In the presence of magnesium, manganese is inhibitory. In terms of biological role, endonuclease that specifically degrades the RNA of RNA-DNA hybrids. Plays a role in RNA polymerase II (RNAp II) transcription termination by degrading R-loop RNA-DNA hybrid formation at G-rich pause sites located downstream of the poly(A) site and behind the elongating RNAp II. The sequence is that of Ribonuclease H1 (Rnaseh1) from Mus musculus (Mouse).